Here is a 273-residue protein sequence, read N- to C-terminus: Dormancy associated translation inhibitor (273 aa).

Interacts with human TLR2.

Involved in translation regulation. Can also stimulate macrophages and peripheral blood mononuclear cells (PBMC) to secrete important cytokines that may be significant in granuloma formation and its maintenance. Increases secretion of IFN-gamma, TNF-alpha, IL-1 beta and IL-8 through human Toll-like receptor 2 (TLR2) signaling pathway. The polypeptide is Dormancy associated translation inhibitor (Mycobacterium tuberculosis (strain CDC 1551 / Oshkosh)).